The primary structure comprises 171 residues: Large ribosomal subunit protein uL10 (171 aa).

The protein belongs to the universal ribosomal protein uL10 family. As to quaternary structure, part of the ribosomal stalk of the 50S ribosomal subunit. The N-terminus interacts with L11 and the large rRNA to form the base of the stalk. The C-terminus forms an elongated spine to which L12 dimers bind in a sequential fashion forming a multimeric L10(L12)X complex.

Forms part of the ribosomal stalk, playing a central role in the interaction of the ribosome with GTP-bound translation factors. The chain is Large ribosomal subunit protein uL10 from Corynebacterium diphtheriae (strain ATCC 700971 / NCTC 13129 / Biotype gravis).